Here is a 563-residue protein sequence, read N- to C-terminus: Beta-catenin-like protein 1 (563 aa).

At Met1 the chain carries N-acetylmethionine. Residues 1-81 (MDVGELLSYQ…EEEEPLDESS (81 aa)) form a disordered region. Positions 16–33 (KRPRDDEEEELKTRRKQT) match the Nuclear localization signal motif. The span at 34-45 (GPRERGRYREDE) shows a compositional bias: basic and acidic residues. Positions 66–78 (DGEEEEEEEEPLD) are enriched in acidic residues. HEAT repeat units lie at residues 79–129 (ESSV…VVAT) and 134–176 (YHLL…TLHE). The residue at position 91 (Lys91) is an N6-acetyllysine. Positions 130 to 140 (MPDLYHLLVEL) match the Nuclear export signal (NES) motif. ARM repeat units lie at residues 178–228 (EEGA…MAEF), 229–273 (RPEM…LQDN), 274–323 (DENR…CLML), 325–363 (SNRE…AMIG), and 364–417 (PEGA…LLRN). At Ser389 the chain carries Phosphoserine. A coiled-coil region spans residues 476 to 540 (DMEDEFYLRR…HIIKEYAENI (65 aa)). Position 545 is a phosphoserine (Ser545).

Component of the PRP19-CDC5L splicing complex composed of a core complex comprising a homotetramer of PRPF19, CDC5L, PLRG1 and BCAS2, and at least three less stably associated proteins CTNNBL1, CWC15 and HSPA8. Interacts directly with CWC15 and CDC5L in the complex. Interacts with AICDA; the interaction is important for the antibody diversification activity of AICDA. Interacts with PRPF31 (via its NLS). Interacts (via its N-terminal NLS) with KPNA1 and KPNA2.

It localises to the nucleus. Its function is as follows. Component of the PRP19-CDC5L complex that forms an integral part of the spliceosome and is required for activating pre-mRNA splicing. Participates in AID/AICDA-mediated somatic hypermutation (SHM) and class-switch recombination (CSR), 2 processes resulting in the production of high-affinity, mutated isotype-switched antibodies. The chain is Beta-catenin-like protein 1 (Ctnnbl1) from Rattus norvegicus (Rat).